The sequence spans 329 residues: GTP 3',8-cyclase (329 aa).

In terms of domain architecture, Radical SAM core spans alanine 8 to alanine 234. A GTP-binding site is contributed by arginine 17. Positions 24 and 28 each coordinate [4Fe-4S] cluster. Residue tyrosine 30 participates in S-adenosyl-L-methionine binding. Cysteine 31 contacts [4Fe-4S] cluster. Arginine 68 is a GTP binding site. Glycine 72 provides a ligand contact to S-adenosyl-L-methionine. A GTP-binding site is contributed by threonine 99. Serine 123 contacts S-adenosyl-L-methionine. Residue lysine 160 participates in GTP binding. Residue methionine 194 participates in S-adenosyl-L-methionine binding. Residues cysteine 257 and cysteine 260 each coordinate [4Fe-4S] cluster. Arginine 262 to arginine 264 serves as a coordination point for GTP. Cysteine 274 lines the [4Fe-4S] cluster pocket.

Belongs to the radical SAM superfamily. MoaA family. In terms of assembly, monomer and homodimer. It depends on [4Fe-4S] cluster as a cofactor.

It catalyses the reaction GTP + AH2 + S-adenosyl-L-methionine = (8S)-3',8-cyclo-7,8-dihydroguanosine 5'-triphosphate + 5'-deoxyadenosine + L-methionine + A + H(+). It participates in cofactor biosynthesis; molybdopterin biosynthesis. Its function is as follows. Catalyzes the cyclization of GTP to (8S)-3',8-cyclo-7,8-dihydroguanosine 5'-triphosphate. This Escherichia fergusonii (strain ATCC 35469 / DSM 13698 / CCUG 18766 / IAM 14443 / JCM 21226 / LMG 7866 / NBRC 102419 / NCTC 12128 / CDC 0568-73) protein is GTP 3',8-cyclase.